We begin with the raw amino-acid sequence, 62 residues long: Photosystem II reaction center protein Z (62 aa).

2 helical membrane passes run 8-28 (AVFALIATSSILLISVPVVFA) and 41-61 (FSGTSLWIGLVFLVGILNSLI).

Belongs to the PsbZ family. In terms of assembly, PSII is composed of 1 copy each of membrane proteins PsbA, PsbB, PsbC, PsbD, PsbE, PsbF, PsbH, PsbI, PsbJ, PsbK, PsbL, PsbM, PsbT, PsbY, PsbZ, Psb30/Ycf12, at least 3 peripheral proteins of the oxygen-evolving complex and a large number of cofactors. It forms dimeric complexes.

Its subcellular location is the plastid. It is found in the chloroplast thylakoid membrane. In terms of biological role, may control the interaction of photosystem II (PSII) cores with the light-harvesting antenna, regulates electron flow through the 2 photosystem reaction centers. PSII is a light-driven water plastoquinone oxidoreductase, using light energy to abstract electrons from H(2)O, generating a proton gradient subsequently used for ATP formation. This chain is Photosystem II reaction center protein Z, found in Vitis vinifera (Grape).